We begin with the raw amino-acid sequence, 285 residues long: Chromatin modification-related protein YNG2 (285 aa).

2 disordered regions span residues 1 to 24 (MSFE…SNLK) and 155 to 201 (RTVA…GANF). Polar residues predominate over residues 8 to 24 (DPSSALEQATQDVSNLK). Residues 10-36 (SSALEQATQDVSNLKSESRFLLEEIRA) adopt a coiled-coil conformation. The segment at 224–273 (QLYCFCQSVSYGEMVACDGPNCKYEWFHYGCVNLDEPPKGQWYCPECRQE) adopts a PHD-type zinc-finger fold. The Zn(2+) site is built by C227, C229, C240, C245, H251, C254, C267, and C270.

It belongs to the ING family. As to quaternary structure, interacts with H3K4me3 and to a lesser extent with H3K4me2. Component of the NuA4 histone acetyltransferase complex.

Its subcellular location is the nucleus. Functionally, component of the NuA4 histone acetyltransferase complex which is involved in transcriptional activation of selected genes principally by acetylation of nucleosomal histone H4 and H2A. The NuA4 complex is also involved in DNA repair. Involved in cell cycle progression and meiosis. This is Chromatin modification-related protein YNG2 (YNG2) from Eremothecium gossypii (strain ATCC 10895 / CBS 109.51 / FGSC 9923 / NRRL Y-1056) (Yeast).